The primary structure comprises 562 residues: Glucose-6-phosphate isomerase (562 aa).

The active-site Proton donor is Glu-370. Residues His-401 and Lys-526 contribute to the active site.

The protein belongs to the GPI family.

It localises to the cytoplasm. The enzyme catalyses alpha-D-glucose 6-phosphate = beta-D-fructose 6-phosphate. It functions in the pathway carbohydrate biosynthesis; gluconeogenesis. The protein operates within carbohydrate degradation; glycolysis; D-glyceraldehyde 3-phosphate and glycerone phosphate from D-glucose: step 2/4. Its function is as follows. Catalyzes the reversible isomerization of glucose-6-phosphate to fructose-6-phosphate. This chain is Glucose-6-phosphate isomerase, found in Deinococcus geothermalis (strain DSM 11300 / CIP 105573 / AG-3a).